Here is a 588-residue protein sequence, read N- to C-terminus: Peptidoglycan D,D-transpeptidase FtsI (588 aa).

Residues 19–39 (FISWRFALLCGCILLALAFLL) form a helical membrane-spanning segment. Ser307 acts as the Acyl-ester intermediate in catalysis. A propeptide spanning residues 578–588 (INQGEGTGGRS) is cleaved from the precursor.

It belongs to the transpeptidase family. FtsI subfamily.

It localises to the cell inner membrane. The catalysed reaction is Preferential cleavage: (Ac)2-L-Lys-D-Ala-|-D-Ala. Also transpeptidation of peptidyl-alanyl moieties that are N-acyl substituents of D-alanine.. It participates in cell wall biogenesis; peptidoglycan biosynthesis. Its function is as follows. Catalyzes cross-linking of the peptidoglycan cell wall at the division septum. The protein is Peptidoglycan D,D-transpeptidase FtsI of Escherichia coli O157:H7.